The chain runs to 257 residues: DNA repair protein RecO (257 aa).

It belongs to the RecO family.

Its function is as follows. Involved in DNA repair and RecF pathway recombination. This Clostridium kluyveri (strain ATCC 8527 / DSM 555 / NBRC 12016 / NCIMB 10680 / K1) protein is DNA repair protein RecO.